Reading from the N-terminus, the 717-residue chain is Scinderin (717 aa).

The actin-severing stretch occupies residues 1–363 (MAPERHPPAF…DGFGKVYVTE (363 aa)). The Gelsolin-like 1 repeat unit spans residues 28–108 (ELVPVPPSRH…IQGYESNEFV (81 aa)). Residues 112-119 (KGGIKYKA) and 138-146 (RLLHIKGRR) each bind a 1,2-diacyl-sn-glycero-3-phospho-(1D-myo-inositol-4,5-bisphosphate). 5 Gelsolin-like repeats span residues 148 to 220 (VRAT…PDEL), 265 to 340 (VVAE…TPIF), 408 to 483 (RVPV…PHLL), 526 to 590 (AEVD…EEFW), and 628 to 703 (IEEV…PPTF). The ca(2+)-dependent actin binding stretch occupies residues 364-715 (RVAKIEQIEF…WFLAWDSNKW (352 aa)). The Ca(2+) site is built by Asn-538, Asp-539, Glu-562, Asp-643, Asp-644, and Glu-666.

It belongs to the villin/gelsolin family.

It localises to the cytoplasm. The protein localises to the cytoskeleton. Its subcellular location is the cell projection. The protein resides in the podosome. In terms of biological role, ca(2+)-dependent actin filament-severing protein that has a regulatory function in exocytosis by affecting the organization of the microfilament network underneath the plasma membrane. In vitro, also has barbed end capping and nucleating activities in the presence of Ca(2+). Severing activity is inhibited by phosphatidylinositol 4,5-bis-phosphate (PIP2). Required for megakaryocyte differentiation, maturation, polyploidization and apoptosis with the release of platelet-like particles. Plays a role in osteoclastogenesis (OCG) and actin cytoskeletal organization in osteoclasts. Regulates chondrocyte proliferation and differentiation. Inhibits cell proliferation and tumorigenesis. Signaling is mediated by MAPK, p38 and JNK pathways. The sequence is that of Scinderin (SCIN) from Gallus gallus (Chicken).